Consider the following 257-residue polypeptide: Imidazole glycerol phosphate synthase subunit HisF (257 aa).

Active-site residues include aspartate 11 and aspartate 130.

The protein belongs to the HisA/HisF family. Heterodimer of HisH and HisF.

Its subcellular location is the cytoplasm. The enzyme catalyses 5-[(5-phospho-1-deoxy-D-ribulos-1-ylimino)methylamino]-1-(5-phospho-beta-D-ribosyl)imidazole-4-carboxamide + L-glutamine = D-erythro-1-(imidazol-4-yl)glycerol 3-phosphate + 5-amino-1-(5-phospho-beta-D-ribosyl)imidazole-4-carboxamide + L-glutamate + H(+). Its pathway is amino-acid biosynthesis; L-histidine biosynthesis; L-histidine from 5-phospho-alpha-D-ribose 1-diphosphate: step 5/9. In terms of biological role, IGPS catalyzes the conversion of PRFAR and glutamine to IGP, AICAR and glutamate. The HisF subunit catalyzes the cyclization activity that produces IGP and AICAR from PRFAR using the ammonia provided by the HisH subunit. The protein is Imidazole glycerol phosphate synthase subunit HisF of Shewanella baltica (strain OS155 / ATCC BAA-1091).